A 187-amino-acid polypeptide reads, in one-letter code: Putative adenylate kinase (187 aa).

5 residues coordinate ATP: Gly-10, Gly-12, Lys-13, Thr-14, and Val-15. The NMP stretch occupies residues 30 to 53 (SLSQFVIENKLYTEYDELRQSYII). The segment at 103-113 (GRGWADIKVAE) is LID. ATP is bound at residue Arg-104.

This sequence belongs to the adenylate kinase family. AK6 subfamily. In terms of assembly, interacts with uS11. Not a structural component of 40S pre-ribosomes, but transiently interacts with them by binding to uS11.

The catalysed reaction is AMP + ATP = 2 ADP. It carries out the reaction ATP + H2O = ADP + phosphate + H(+). Broad-specificity nucleoside monophosphate (NMP) kinase that catalyzes the reversible transfer of the terminal phosphate group between nucleoside triphosphates and monophosphates. Also has ATPase activity. Involved in the late maturation steps of the 30S ribosomal particles, specifically 16S rRNA maturation. While NMP activity is not required for ribosome maturation, ATPase activity is. Associates transiently with small ribosomal subunit protein uS11. ATP hydrolysis breaks the interaction with uS11. May temporarily remove uS11 from the ribosome to enable a conformational change of the ribosomal RNA that is needed for the final maturation step of the small ribosomal subunit. The sequence is that of Putative adenylate kinase from Saccharolobus islandicus (strain M.16.4 / Kamchatka #3) (Sulfolobus islandicus).